The following is a 117-amino-acid chain: Large ribosomal subunit protein bL19 (117 aa).

Belongs to the bacterial ribosomal protein bL19 family.

Functionally, this protein is located at the 30S-50S ribosomal subunit interface and may play a role in the structure and function of the aminoacyl-tRNA binding site. In Alkalilimnicola ehrlichii (strain ATCC BAA-1101 / DSM 17681 / MLHE-1), this protein is Large ribosomal subunit protein bL19.